The chain runs to 287 residues: Ribosomal RNA small subunit methyltransferase I (287 aa).

The protein belongs to the methyltransferase superfamily. RsmI family.

Its subcellular location is the cytoplasm. The catalysed reaction is cytidine(1402) in 16S rRNA + S-adenosyl-L-methionine = 2'-O-methylcytidine(1402) in 16S rRNA + S-adenosyl-L-homocysteine + H(+). In terms of biological role, catalyzes the 2'-O-methylation of the ribose of cytidine 1402 (C1402) in 16S rRNA. The sequence is that of Ribosomal RNA small subunit methyltransferase I from Streptococcus pyogenes serotype M1.